A 499-amino-acid polypeptide reads, in one-letter code: Putative DBH-like monooxygenase protein 2 (499 aa).

A signal peptide spans 1–16; sequence MAHDLLFRLFPLLALG. The 117-residue stretch at 40-156 folds into the DOMON domain; it reads NVIFLRWDFD…NTVRVLAAYG (117 aa). Tyrosine 209 is an active-site residue. Disulfide bonds link cysteine 211/cysteine 261 and cysteine 248/cysteine 271. Asparagine 236 carries an N-linked (GlcNAc...) asparagine glycan. Histidine 241 and histidine 242 together coordinate Cu cation. N-linked (GlcNAc...) asparagine glycosylation occurs at asparagine 250. Positions 308, 389, and 391 each coordinate Cu cation. 2 cysteine pairs are disulfide-bonded: cysteine 365/cysteine 480 and cysteine 443/cysteine 465. The active site involves histidine 389. Residue asparagine 404 is glycosylated (N-linked (GlcNAc...) asparagine). Cu cation is bound at residue methionine 464. N-linked (GlcNAc...) asparagine glycosylation occurs at asparagine 476.

Belongs to the copper type II ascorbate-dependent monooxygenase family. The cofactor is Cu(2+).

The sequence is that of Putative DBH-like monooxygenase protein 2 (MOXD2P) from Homo sapiens (Human).